A 380-amino-acid polypeptide reads, in one-letter code: Queuine tRNA-ribosyltransferase (380 aa).

Asp-96 serves as the catalytic Proton acceptor. Substrate is bound by residues 96–100, Asp-150, Gln-193, and Gly-220; that span reads DSGGF. The tract at residues 251–257 is RNA binding; that stretch reads GVGAPDS. The active-site Nucleophile is the Asp-270. An RNA binding; important for wobble base 34 recognition region spans residues 275–279; the sequence is TRIAR. Zn(2+) contacts are provided by Cys-308, Cys-310, Cys-313, and His-339.

This sequence belongs to the queuine tRNA-ribosyltransferase family. In terms of assembly, homodimer. Within each dimer, one monomer is responsible for RNA recognition and catalysis, while the other monomer binds to the replacement base PreQ1. Requires Zn(2+) as cofactor.

It catalyses the reaction 7-aminomethyl-7-carbaguanine + guanosine(34) in tRNA = 7-aminomethyl-7-carbaguanosine(34) in tRNA + guanine. Its pathway is tRNA modification; tRNA-queuosine biosynthesis. Catalyzes the base-exchange of a guanine (G) residue with the queuine precursor 7-aminomethyl-7-deazaguanine (PreQ1) at position 34 (anticodon wobble position) in tRNAs with GU(N) anticodons (tRNA-Asp, -Asn, -His and -Tyr). Catalysis occurs through a double-displacement mechanism. The nucleophile active site attacks the C1' of nucleotide 34 to detach the guanine base from the RNA, forming a covalent enzyme-RNA intermediate. The proton acceptor active site deprotonates the incoming PreQ1, allowing a nucleophilic attack on the C1' of the ribose to form the product. After dissociation, two additional enzymatic reactions on the tRNA convert PreQ1 to queuine (Q), resulting in the hypermodified nucleoside queuosine (7-(((4,5-cis-dihydroxy-2-cyclopenten-1-yl)amino)methyl)-7-deazaguanosine). This chain is Queuine tRNA-ribosyltransferase, found in Streptococcus equi subsp. equi (strain 4047).